A 475-amino-acid polypeptide reads, in one-letter code: Serralysin G (475 aa).

The propeptide occupies 1–14; sequence MALYGKKTDLSSAS. Histidine 186 contacts Zn(2+). The active site involves glutamate 187. Zn(2+) is bound by residues histidine 190 and tyrosine 226. 30 residues coordinate Ca(2+): arginine 261, glycine 263, threonine 265, aspartate 293, glycine 295, glycine 296, aspartate 298, glutamate 337, glycine 342, glycine 344, aspartate 346, asparagine 351, asparagine 355, glycine 359, glycine 360, alanine 361, glycine 362, aspartate 364, glycine 368, glycine 370, glycine 371, aspartate 373, glycine 377, glycine 378, alanine 379, glycine 380, aspartate 382, aspartate 391, aspartate 398, and aspartate 408. Hemolysin-type calcium-binding repeat units follow at residues 340-357 and 358-375; these read IGGSGHDVIVGNLSDNRI and DGGAGNDVLYGDGGADIL.

Belongs to the peptidase M10B family. Requires Ca(2+) as cofactor. Zn(2+) serves as cofactor.

The protein resides in the secreted. The catalysed reaction is Preferential cleavage of bonds with hydrophobic residues in P1'.. This Dickeya chrysanthemi (Pectobacterium chrysanthemi) protein is Serralysin G (prtG).